A 412-amino-acid polypeptide reads, in one-letter code: Peptidase T (412 aa).

Residue H84 participates in Zn(2+) binding. Residue D86 is part of the active site. D146 lines the Zn(2+) pocket. The active-site Proton acceptor is E179. The Zn(2+) site is built by E180, D202, and H385.

The protein belongs to the peptidase M20B family. Zn(2+) is required as a cofactor.

It localises to the cytoplasm. It catalyses the reaction Release of the N-terminal residue from a tripeptide.. Its function is as follows. Cleaves the N-terminal amino acid of tripeptides. The chain is Peptidase T from Pasteurella multocida (strain Pm70).